Here is a 436-residue protein sequence, read N- to C-terminus: MDKDSTYYFIGIKGSGMSSLALILHDEGYKVEGSDIEQYTFTQKGLEAAGIKILPFDPANLREGLTVIAGNAFTDEHPEIKKARAMGLKVIRYHELLGQMLDKYTSIGVAGTHGKTSTTGLLAHVLSGLDKTSYLIGDGTGKGIPDARFFVFEADEYRRHFIAYHPDYMIMTNVDFDHPDYYKDLADVESAFQQVADQVHKGIFAWGEDESLRKINTSVPVYYYGTKENDDFQATNISRTTTGSEFDVIHKGEKLGRFTINLFGEHNVLNSLAVIAVAYFEKVDLDLVQKELLTYQGVKRRFSKEAVADNILIDDYAHHPSEIKATLDAARQEFPDKKIVAVFQPHTYSRTAALMDGFAKSLSLADQVVLTEIFGSAREDAGAVSSQDLADKIGNNTKLIHQDDLSAISDLHDAVLVFMGAGDITKYENAYKALFK.

Position 111–117 (111–117 (GTHGKTS)) interacts with ATP.

This sequence belongs to the MurCDEF family.

The protein resides in the cytoplasm. It carries out the reaction UDP-N-acetyl-alpha-D-muramate + L-alanine + ATP = UDP-N-acetyl-alpha-D-muramoyl-L-alanine + ADP + phosphate + H(+). The protein operates within cell wall biogenesis; peptidoglycan biosynthesis. Its function is as follows. Cell wall formation. The polypeptide is UDP-N-acetylmuramate--L-alanine ligase (Pediococcus pentosaceus (strain ATCC 25745 / CCUG 21536 / LMG 10740 / 183-1w)).